Reading from the N-terminus, the 280-residue chain is Shikimate dehydrogenase (NADP(+)) (280 aa).

Residues 20–22 (SRS) and T67 each bind shikimate. K71 serves as the catalytic Proton acceptor. D82 is an NADP(+) binding site. Positions 91 and 106 each coordinate shikimate. NADP(+)-binding positions include 131–135 (GAGGS) and L220. Residue Y222 coordinates shikimate. An NADP(+)-binding site is contributed by G243.

Belongs to the shikimate dehydrogenase family. Homodimer.

It catalyses the reaction shikimate + NADP(+) = 3-dehydroshikimate + NADPH + H(+). The protein operates within metabolic intermediate biosynthesis; chorismate biosynthesis; chorismate from D-erythrose 4-phosphate and phosphoenolpyruvate: step 4/7. Its function is as follows. Involved in the biosynthesis of the chorismate, which leads to the biosynthesis of aromatic amino acids. Catalyzes the reversible NADPH linked reduction of 3-dehydroshikimate (DHSA) to yield shikimate (SA). The sequence is that of Shikimate dehydrogenase (NADP(+)) from Rhodopseudomonas palustris (strain HaA2).